A 99-amino-acid chain; its full sequence is Sarcosine oxidase subunit delta (99 aa).

Zn(2+) is bound by residues cysteine 6, cysteine 9, histidine 59, and cysteine 63.

It belongs to the SoxD family. In terms of assembly, heterotetramer composed of subunits alpha (SoxA), beta (SoxB), gamma (SoxG) and delta (SoxD).

It localises to the cytoplasm. The catalysed reaction is sarcosine + (6S)-5,6,7,8-tetrahydrofolate + O2 = (6R)-5,10-methylene-5,6,7,8-tetrahydrofolate + glycine + H2O2. It catalyses the reaction sarcosine + O2 + H2O = formaldehyde + glycine + H2O2. Its activity is regulated as follows. Inhibited by Zn(2+), Cu(2+), Cd(2+), Hg(2+), Ag(+), p-chloromercuribenzoate (p-CMB), iodoacetamide, N-ethylmaleimide, CN(-), o-phenanthroline and sodium lauryl sulfate. In terms of biological role, in the presence of tetrahydrofolate, catalyzes the oxidative demethylation of sarcosine to yield glycine, 5,10-methylenetetrahydrofolate and hydrogen peroxide. In the absence of tetrahydrofolate, catalyzes the oxidative demethylation of sarcosine to yield glycine, formaldehyde and hydrogen peroxide. Can also use N-methyl-L-alanine and N-ethyl-L-glycine. Is very specific for oxygen as an acceptor. The polypeptide is Sarcosine oxidase subunit delta (Corynebacterium sp. (strain U-96)).